Here is a 65-residue protein sequence, read N- to C-terminus: Small ribosomal subunit protein bS21 (65 aa).

This sequence belongs to the bacterial ribosomal protein bS21 family.

The chain is Small ribosomal subunit protein bS21 from Thermodesulfovibrio yellowstonii (strain ATCC 51303 / DSM 11347 / YP87).